The primary structure comprises 1152 residues: Integrin alpha-M (1152 aa).

An N-terminal signal peptide occupies residues 1–16 (MALRVLLLTALTLCHG). Residues 17–1104 (FNLDTENAMT…TKVEPFEVPN (1088 aa)) lie on the Extracellular side of the membrane. FG-GAP repeat units follow at residues 18–75 (NLDT…SCEP) and 76–135 (IRLQ…QQPQ). An intrachain disulfide couples cysteine 66 to cysteine 73. N-linked (GlcNAc...) asparagine glycosylation occurs at asparagine 86. Cysteine 105 and cysteine 123 are disulfide-bonded. The 179-residue stretch at 150 to 328 (DIAFLIDGSG…EALKTIQNQL (179 aa)) folds into the VWFA domain. Asparagine 240 is a glycosylation site (N-linked (GlcNAc...) asparagine). FG-GAP repeat units follow at residues 339 to 390 (QTGS…STFI), 391 to 442 (NMTR…TGMW), 443 to 503 (ESNA…RARW), 506 to 564 (DAVL…SGIS), and 569 to 629 (QRIA…FNPR). N-linked (GlcNAc...) asparagine glycosylation is present at asparagine 391. Positions 465, 467, 469, 473, 529, 531, 533, 537, 592, 596, and 600 each coordinate Ca(2+). Asparagine 469 is a glycosylation site (N-linked (GlcNAc...) asparagine). The cysteines at positions 654 and 711 are disulfide-linked. N-linked (GlcNAc...) asparagine glycans are attached at residues asparagine 692, asparagine 696, and asparagine 734. Cysteine 770 and cysteine 776 are disulfide-bonded. Asparagine 801 is a glycosylation site (N-linked (GlcNAc...) asparagine). A disulfide bridge links cysteine 847 with cysteine 864. Residues asparagine 880, asparagine 900, asparagine 911, asparagine 940, asparagine 946, asparagine 978, asparagine 993, and asparagine 1021 are each glycosylated (N-linked (GlcNAc...) asparagine). Intrachain disulfides connect cysteine 998–cysteine 1022 and cysteine 1027–cysteine 1032. 3 N-linked (GlcNAc...) asparagine glycosylation sites follow: asparagine 1044, asparagine 1050, and asparagine 1075. The helical transmembrane segment at 1105 to 1128 (PLPLIVGSSVGGLLLLALITAALY) threads the bilayer. The Cytoplasmic segment spans residues 1129–1152 (KLGFFKRQYKDMMSEGGPPGAEPQ). The short motif at 1131 to 1135 (GFFKR) is the GFFKR motif element.

It belongs to the integrin alpha chain family. Heterodimer of an alpha and a beta subunit. ITGAM associates with ITGB2. Found in a complex with CD177 and ITGB2/CD18. Interacts with JAM3. Interacts with THBD. Interacts with complement factor H/CFH; this interaction mediates adhesion of neutrophils to pathogens leading to pathogen clearance. Interacts with TMEM268; this interaction inhibits ITGAM degradation via the endosome-lysosome pathway. As to expression, predominantly expressed in monocytes and granulocytes. Expressed in neutrophils (at protein level).

Its subcellular location is the cell membrane. It localises to the membrane raft. Integrin ITGAM/ITGB2 is implicated in various adhesive interactions of monocytes, macrophages and granulocytes as well as in mediating the uptake of complement-coated particles and pathogens. It is identical with CR-3, the receptor for the iC3b fragment of the third complement component. It probably recognizes the R-G-D peptide in C3b. Integrin ITGAM/ITGB2 is also a receptor for fibrinogen, factor X and ICAM1. It recognizes P1 and P2 peptides of fibrinogen gamma chain. Regulates neutrophil migration. In association with beta subunit ITGB2/CD18, required for CD177-PRTN3-mediated activation of TNF primed neutrophils. May regulate phagocytosis-induced apoptosis in extravasated neutrophils. May play a role in mast cell development. Required with TYROBP/DAP12 in microglia to control production of microglial superoxide ions which promote the neuronal apoptosis that occurs during brain development. This Homo sapiens (Human) protein is Integrin alpha-M (ITGAM).